A 660-amino-acid chain; its full sequence is ATPase WRNIP1 (660 aa).

A UBZ4-type zinc finger spans residues 17–44 (QVQCPVCQQMMPAAHINSHLDRCLLLHP). The Zn(2+) site is built by cysteine 20, cysteine 23, histidine 31, histidine 35, and cysteine 39. A disordered region spans residues 50-191 (PAAGPHRAGE…DDPGHWDADA (142 aa)). Serine 65 and serine 75 each carry phosphoserine. The segment covering 76–89 (ESSALKQPATPTAA) has biased composition (polar residues). Residue lysine 81 forms a Glycyl lysine isopeptide (Lys-Gly) (interchain with G-Cter in ubiquitin) linkage. Position 85 is a phosphothreonine (threonine 85). A phosphoserine mark is found at serine 91 and serine 92. The span at 92–104 (SEGEGEEGDDGGE) shows a compositional bias: acidic residues. A Phosphothreonine modification is found at threonine 116. Low complexity predominate over residues 135–155 (ARKGLGKRPAAAAAAGSASPR). Lysine 141 participates in a covalent cross-link: Glycyl lysine isopeptide (Lys-Gly) (interchain with G-Cter in ubiquitin). Serine 153 is subject to Phosphoserine. The segment covering 159 to 182 (ETEAQEEEEAGVDGDGDADVDGED) has biased composition (acidic residues). Lysine 220 participates in a covalent cross-link: Glycyl lysine isopeptide (Lys-Gly) (interchain with G-Cter in ubiquitin). Position 265–271 (265–271 (PGCGKTT)) interacts with ATP. Glycyl lysine isopeptide (Lys-Gly) (interchain with G-Cter in ubiquitin) cross-links involve residues lysine 296, lysine 305, lysine 311, lysine 317, and lysine 330. Lysine 477 participates in a covalent cross-link: Glycyl lysine isopeptide (Lys-Gly) (interchain with G-Cter in SUMO2); alternate. Lysine 477 is covalently cross-linked (Glycyl lysine isopeptide (Lys-Gly) (interchain with G-Cter in ubiquitin); alternate). Phosphotyrosine occurs at positions 529 and 557. Residue lysine 622 forms a Glycyl lysine isopeptide (Lys-Gly) (interchain with G-Cter in ubiquitin) linkage. A Glycyl lysine isopeptide (Lys-Gly) (interchain with G-Cter in ubiquitin); alternate cross-link involves residue lysine 628. At lysine 628 the chain carries N6-acetyllysine; alternate. Residue lysine 631 forms a Glycyl lysine isopeptide (Lys-Gly) (interchain with G-Cter in ubiquitin) linkage.

This sequence belongs to the AAA ATPase family. RarA/MGS1/WRNIP1 subfamily. Forms homooligomers, possibly octamers. Directly interacts with POLD1, POLD2 and POLD4. Interacts with the N-terminal domain of WRN. Interacts (via UBZ4-type zinc finger) with monoubiquitin and polyubiquitin. Interacts with TRIM14 and PPP6C; these interactions positively regulate the RIGI signaling pathway. Post-translationally, sumoylated with SUMO1 and SUMO2/3. Ubiquitously expressed.

Its subcellular location is the nucleus. The protein resides in the cytoplasm. The enzyme catalyses ATP + H2O = ADP + phosphate + H(+). Functionally, functions as a modulator of initiation or reinitiation events during DNA polymerase delta-mediated DNA synthesis. In the presence of ATP, stimulation of DNA polymerase delta-mediated DNA synthesis is decreased. Also plays a role in the innate immune defense against viruses. Stabilizes the RIGI dsRNA interaction and promotes RIGI 'Lys-63'-linked polyubiquitination. In turn, RIGI transmits the signal through mitochondrial MAVS. This Rattus norvegicus (Rat) protein is ATPase WRNIP1.